The sequence spans 57 residues: MTILKWALIFFVVSVIVGVLGFTGISAASADVARILFYIFLVIFLVLLILGLTIFRA.

2 helical membrane-spanning segments follow: residues 6–26 and 35–55; these read WALIFFVVSVIVGVLGFTGIS and ILFYIFLVIFLVLLILGLTIF.

Belongs to the UPF0391 family.

It is found in the cell membrane. This Rhodopseudomonas palustris (strain BisB18) protein is UPF0391 membrane protein RPC_2356.